We begin with the raw amino-acid sequence, 201 residues long: MSHDANTIDQRSHEGNLNKLGFWVFLTAEFSLFGTLFATLLTLQHGGDYAGKMTTELFELPLVLIMTFALLISSYTCGIAIYYMRKEKEKLMLIWMIITVLLGMVFVGFEIYEFAHYVHEGVNLTIGSYWSSFFILLGTHGAHVSLGIVWIICLLIQVAMRGLNKDNAPKLFIVSLYWHFLDVVWIFIFTAVYMIGMVFSG.

A run of 5 helical transmembrane segments spans residues 20 to 40 (LGFWVFLTAEFSLFGTLFATL), 62 to 82 (LVLIMTFALLISSYTCGIAIY), 91 to 111 (LMLIWMIITVLLGMVFVGFEI), 133 to 153 (FFILLGTHGAHVSLGIVWIIC), and 180 to 200 (FLDVVWIFIFTAVYMIGMVFS).

It belongs to the cytochrome c oxidase subunit 3 family.

Its subcellular location is the cell membrane. It catalyses the reaction 2 a quinol + O2 = 2 a quinone + 2 H2O. In terms of biological role, catalyzes quinol oxidation with the concomitant reduction of oxygen to water. The chain is Probable quinol oxidase subunit 3 (qoxC) from Staphylococcus saprophyticus subsp. saprophyticus (strain ATCC 15305 / DSM 20229 / NCIMB 8711 / NCTC 7292 / S-41).